A 167-amino-acid chain; its full sequence is Gametocyte-specific factor 1 (167 aa).

2 CHHC U11-48K-type zinc fingers span residues 14 to 41 (LLQCPYDKNHQIRACRFPYHLIKCRKNH) and 48 to 75 (LATCPFNARHQVPRAEISHHISSCDDKS). Zn(2+)-binding residues include Cys17, His23, His33, Cys37, Cys51, His57, His67, and Cys71.

This sequence belongs to the UPF0224 (FAM112) family.

The protein resides in the cytoplasm. Its function is as follows. Required for spermatogenesis and is involved in the suppression of retrotransposon transcription in male germ cells. The protein is Gametocyte-specific factor 1 (GTSF1) of Bos taurus (Bovine).